Reading from the N-terminus, the 226-residue chain is RNA-binding protein 24 (226 aa).

The region spanning threonine 11–leucine 88 is the RRM domain.

Its subcellular location is the nucleus. It is found in the cytoplasm. Multifunctional RNA-binding protein involved in the regulation of pre-mRNA splicing, mRNA stability and mRNA translation important for cell fate decision and differentiation. Plays a major role in pre-mRNA alternative splicing regulation. Mediates preferentially muscle-specific exon inclusion in numerous mRNAs important for striated cardiac and skeletal muscle cell differentiation. Binds to intronic splicing enhancer (ISE) composed of stretches of GU-rich motifs localized in flanking intron of exon that will be included by alternative splicing. Involved in embryonic stem cell (ESC) transition to cardiac cell differentiation by promoting pre-mRNA alternative splicing events of several pluripotency and/or differentiation genes. Plays a role in the regulation of mRNA stability and mRNA translation to which it is bound. Involved in myogenic differentiation by regulating myog levels. Binds to a huge amount of mRNAs. Required for embryonic heart development, sarcomer and M-band formation in striated muscles. The sequence is that of RNA-binding protein 24 (rbm24) from Xenopus tropicalis (Western clawed frog).